Here is a 283-residue protein sequence, read N- to C-terminus: MSAQLIDGKAVAEKLLEKVSAGVGERLAQGKRAPALAVILVGDNPASAVYVGSKKKACEKAGIRSVAYDLPASTSQQQLLEIIDGLNADDAVDGILVQLPLPEQIDPQAVIERIDPKKDVDGFHPYNVGRLAIKMPLMRPCTPRGVMTLLEEYGIDPKGKKAVIVGASNIVGRPQALEMLLARATVTVCHSATRNLAEEVAAADILVVGVGIPNFVKGEWVKPGAVVIDVGINRLDTGKLCGDVEFDAARERAGFITPVPGGVGPMTVATLLQNTLDSANLNA.

NADP(+)-binding positions include Gly-166–Ser-168, Ser-191, and Ile-232.

This sequence belongs to the tetrahydrofolate dehydrogenase/cyclohydrolase family. Homodimer.

The enzyme catalyses (6R)-5,10-methylene-5,6,7,8-tetrahydrofolate + NADP(+) = (6R)-5,10-methenyltetrahydrofolate + NADPH. It carries out the reaction (6R)-5,10-methenyltetrahydrofolate + H2O = (6R)-10-formyltetrahydrofolate + H(+). It participates in one-carbon metabolism; tetrahydrofolate interconversion. Functionally, catalyzes the oxidation of 5,10-methylenetetrahydrofolate to 5,10-methenyltetrahydrofolate and then the hydrolysis of 5,10-methenyltetrahydrofolate to 10-formyltetrahydrofolate. The protein is Bifunctional protein FolD of Chromobacterium violaceum (strain ATCC 12472 / DSM 30191 / JCM 1249 / CCUG 213 / NBRC 12614 / NCIMB 9131 / NCTC 9757 / MK).